Consider the following 72-residue polypeptide: Protein SlyX homolog (72 aa).

It belongs to the SlyX family.

The polypeptide is Protein SlyX homolog (Vibrio cholerae serotype O1 (strain ATCC 39541 / Classical Ogawa 395 / O395)).